Consider the following 130-residue polypeptide: MAKERWGVAHIYSSENNTIIHITDITGAETIAVGSGGMVVNADRLEGSPTAAILAAKRAAALAKERGITGLHIKVRAPGGHNGPWIPGPGASAAIKTLAREGLKIGIIEDVTPTPHDGCRRKGGKRGRRV.

Belongs to the universal ribosomal protein uS11 family. In terms of assembly, part of the 30S ribosomal subunit.

Its function is as follows. Located on the platform of the 30S subunit. The protein is Small ribosomal subunit protein uS11 of Nanoarchaeum equitans (strain Kin4-M).